The primary structure comprises 220 residues: MAYRDQPLGELALSIPRASALFRQYDMDYCCGGKQTLARAAARHDVDIDIIEAQLAQLAEQPIEKDWRAVPLADIIDHIVVRYHDRHREQLPELILQATKVERVHADKPNVPRGLTKYLTALHEELSSHMMKEEQILFPMIKQGMGRQATGPISVMESEHDEAGELVDVIKHVTKNVTPPPEACTTWKAMYNGINEMIDDLMEHISLENNVLFPRALAGE.

Belongs to the RIC family. YtfE subfamily. In terms of assembly, homodimer.

Its subcellular location is the cytoplasm. In terms of biological role, di-iron-containing protein involved in the repair of iron-sulfur clusters damaged by oxidative and nitrosative stress conditions. This chain is Iron-sulfur cluster repair protein YtfE, found in Salmonella typhimurium (strain LT2 / SGSC1412 / ATCC 700720).